The sequence spans 248 residues: Triosephosphate isomerase (248 aa).

9-11 (NWK) contributes to the substrate binding site. H94 acts as the Electrophile in catalysis. Residue E166 is the Proton acceptor of the active site. Residues G172, S211, and 232 to 233 (GG) each bind substrate.

Belongs to the triosephosphate isomerase family. As to quaternary structure, homodimer.

It localises to the cytoplasm. The catalysed reaction is D-glyceraldehyde 3-phosphate = dihydroxyacetone phosphate. It functions in the pathway carbohydrate biosynthesis; gluconeogenesis. Its pathway is carbohydrate degradation; glycolysis; D-glyceraldehyde 3-phosphate from glycerone phosphate: step 1/1. In terms of biological role, involved in the gluconeogenesis. Catalyzes stereospecifically the conversion of dihydroxyacetone phosphate (DHAP) to D-glyceraldehyde-3-phosphate (G3P). The sequence is that of Triosephosphate isomerase from Herminiimonas arsenicoxydans.